Reading from the N-terminus, the 416-residue chain is Gamma-glutamyl phosphate reductase (416 aa).

The protein belongs to the gamma-glutamyl phosphate reductase family.

It is found in the cytoplasm. The catalysed reaction is L-glutamate 5-semialdehyde + phosphate + NADP(+) = L-glutamyl 5-phosphate + NADPH + H(+). It functions in the pathway amino-acid biosynthesis; L-proline biosynthesis; L-glutamate 5-semialdehyde from L-glutamate: step 2/2. Functionally, catalyzes the NADPH-dependent reduction of L-glutamate 5-phosphate into L-glutamate 5-semialdehyde and phosphate. The product spontaneously undergoes cyclization to form 1-pyrroline-5-carboxylate. The sequence is that of Gamma-glutamyl phosphate reductase from Streptococcus pyogenes serotype M49 (strain NZ131).